Reading from the N-terminus, the 263-residue chain is 4-hydroxy-tetrahydrodipicolinate reductase (263 aa).

10-15 (GASGKM) is a binding site for NAD(+). Residue Arg38 participates in NADP(+) binding. Residues 97–99 (GTT) and 123–126 (APNF) each bind NAD(+). His153 functions as the Proton donor/acceptor in the catalytic mechanism. Residue His154 coordinates (S)-2,3,4,5-tetrahydrodipicolinate. The Proton donor role is filled by Lys157. Position 163-164 (163-164 (GT)) interacts with (S)-2,3,4,5-tetrahydrodipicolinate.

The protein belongs to the DapB family.

It is found in the cytoplasm. It carries out the reaction (S)-2,3,4,5-tetrahydrodipicolinate + NAD(+) + H2O = (2S,4S)-4-hydroxy-2,3,4,5-tetrahydrodipicolinate + NADH + H(+). The enzyme catalyses (S)-2,3,4,5-tetrahydrodipicolinate + NADP(+) + H2O = (2S,4S)-4-hydroxy-2,3,4,5-tetrahydrodipicolinate + NADPH + H(+). It functions in the pathway amino-acid biosynthesis; L-lysine biosynthesis via DAP pathway; (S)-tetrahydrodipicolinate from L-aspartate: step 4/4. Catalyzes the conversion of 4-hydroxy-tetrahydrodipicolinate (HTPA) to tetrahydrodipicolinate. In Dehalococcoides mccartyi (strain ATCC BAA-2100 / JCM 16839 / KCTC 5957 / BAV1), this protein is 4-hydroxy-tetrahydrodipicolinate reductase.